We begin with the raw amino-acid sequence, 210 residues long: MEDRQLTNADNENGRKCACGGAAPFFVGLVVALVFGWWAFPEMLYSQKEQPIRFSHKVHVNDAGMECKQCHSLREDGSFAGLPSTASCAECHSDVLGSDPEEARFVAEYVKSGKEVKWLVYQYQPDNVFFSHAAHSLDGCNQCHQFSERELCNLCHLDVADSDKAPTHYENKLTGYSKQTMKMWQCERCHANENHLGVTNSSNACFVCHK.

A helical membrane pass occupies residues 20–40 (GGAAPFFVGLVVALVFGWWAF). Residues cysteine 67, cysteine 70, histidine 71, cysteine 88, cysteine 91, histidine 92, cysteine 140, cysteine 143, histidine 144, cysteine 152, cysteine 155, histidine 156, cysteine 186, cysteine 189, histidine 190, cysteine 205, cysteine 208, and histidine 209 each contribute to the heme site.

Belongs to the multiheme cytochrome c family. As to quaternary structure, the Qrc complex is composed of four subunits: QrcA, QrcB, QrcC and QrcD. Can form a supercomplex with the [NiFe] hydrogenase HynA1 and the tetraheme Type I cytochrome c3 TpIc(3), its physiological electron donors. Heme c is required as a cofactor.

The protein resides in the cell inner membrane. In terms of biological role, component of the respiratory Qrc complex, that catalyzes the reduction of the menaquinone pool using electrons transferred from the reduced periplasmic cytochrome c3, and which is probably involved in sulfate respiration. Is likely essential for growth on H(2) or formate since the periplasmic hydrogenases and/or formate dehydrogenases act as primary electron donors for the Qrc complex. This is Menaquinone reductase, multiheme cytochrome c subunit from Nitratidesulfovibrio vulgaris (strain ATCC 29579 / DSM 644 / CCUG 34227 / NCIMB 8303 / VKM B-1760 / Hildenborough) (Desulfovibrio vulgaris).